A 236-amino-acid chain; its full sequence is Small ribosomal subunit protein uS2c (236 aa).

The protein belongs to the universal ribosomal protein uS2 family.

It is found in the plastid. The protein localises to the chloroplast. The sequence is that of Small ribosomal subunit protein uS2c (rps2) from Nicotiana tabacum (Common tobacco).